The following is a 403-amino-acid chain: Synaptotagmin-7 (403 aa).

The Vesicular segment spans residues 1-16; it reads MYRDPEAASPGAPTRD. Residues 17–37 form a helical membrane-spanning segment; the sequence is VLLVSAIITVSLSVTIVLCGL. Residues 38–403 lie on the Cytoplasmic side of the membrane; the sequence is CHWCQRKLGK…PVAQWHQLKA (366 aa). Ser-52 bears the Phosphoserine mark. The tract at residues 53–103 is disordered; the sequence is LETVGTPDSGRGRGEKKAIKLPAGGKAVNTAPVPGQTPHDESDRRTETRSS. Thr-58 carries the post-translational modification Phosphothreonine. At Ser-61 the chain carries Phosphoserine. A compositionally biased stretch (basic and acidic residues) spans 90–100; sequence PHDESDRRTET. Residues Ser-119 and Ser-122 each carry the phosphoserine modification. 2 consecutive C2 domains span residues 135-255 and 266-399; these read NLGR…TFWK and SRGE…AQWH. Asp-166 lines the Ca(2+) pocket. 2 positions are modified to asymmetric dimethylarginine: Gly-169 and Ser-171. Residues Asp-172, Asp-225, Asp-227, Ser-230, Asp-233, Asp-297, Asp-303, Asp-357, Asp-359, Ser-362, and Asp-365 each coordinate Ca(2+).

The protein belongs to the synaptotagmin family. In terms of assembly, homodimer. Can also form heterodimers with SYT6, SYT9 and SYT10. Interacts with calmodulin (CALM1, CALM2 or CALM3). Interacts with CD63; required for localization to lysosomes. Interacts with APP. Ca(2+) serves as cofactor. Post-translationally, palmitoylated at its vesicular N-terminus; palmitoylation is required for localization to lysosome and phagocytosis in macrophages. As to expression, widely expressed. Expressed in insulin-secreting cells. Present in glucagon-secreting cells (at protein level).

The protein localises to the cell membrane. It localises to the presynaptic cell membrane. Its subcellular location is the cytoplasmic vesicle. It is found in the secretory vesicle. The protein resides in the synaptic vesicle membrane. The protein localises to the lysosome membrane. It localises to the phagosome membrane. Its subcellular location is the peroxisome membrane. It is found in the secretory vesicle membrane. In terms of biological role, ca(2+) sensor involved in Ca(2+)-dependent exocytosis of secretory and synaptic vesicles through Ca(2+) and phospholipid binding to the C2 domain. Ca(2+) induces binding of the C2-domains to phospholipid membranes and to assembled SNARE-complexes; both actions contribute to triggering exocytosis. SYT7 binds Ca(2+) with high affinity and slow kinetics compared to other synaptotagmins. Involved in Ca(2+)-triggered lysosomal exocytosis, a major component of the plasma membrane repair. Ca(2+)-regulated delivery of lysosomal membranes to the cell surface is also involved in the phagocytic uptake of particles by macrophages. Ca(2+)-triggered lysosomal exocytosis also plays a role in bone remodeling by regulating secretory pathways in osteoclasts and osteoblasts. Involved in cholesterol transport from lysosome to peroxisome by promoting membrane contacts between lysosomes and peroxisomes: probably acts by promoting vesicle fusion by binding phosphatidylinositol-4,5-bisphosphate on peroxisomal membranes. Acts as a key mediator of synaptic facilitation, a process also named short-term synaptic potentiation: synaptic facilitation takes place at synapses with a low initial release probability and is caused by influx of Ca(2+) into the axon terminal after spike generation, increasing the release probability of neurotransmitters. Probably mediates synaptic facilitation by directly increasing the probability of release. May also contribute to synaptic facilitation by regulating synaptic vesicle replenishment, a process required to ensure that synaptic vesicles are ready for the arrival of the next action potential: SYT7 is required for synaptic vesicle replenishment by acting as a sensor for Ca(2+) and by forming a complex with calmodulin. Also acts as a regulator of Ca(2+)-dependent insulin and glucagon secretion in beta-cells. Triggers exocytosis by promoting fusion pore opening and fusion pore expansion in chromaffin cells. Also regulates the secretion of some non-synaptic secretory granules of specialized cells. This chain is Synaptotagmin-7, found in Mus musculus (Mouse).